Reading from the N-terminus, the 903-residue chain is Protein translocase subunit SecA (903 aa).

ATP contacts are provided by residues Gln89, 107–111, and Asp502; that span reads GEGKT. The Zn(2+) site is built by Cys886, Cys888, Cys897, and His898.

This sequence belongs to the SecA family. As to quaternary structure, monomer and homodimer. Part of the essential Sec protein translocation apparatus which comprises SecA, SecYEG and auxiliary proteins SecDF-YajC and YidC. The cofactor is Zn(2+).

It is found in the cell inner membrane. Its subcellular location is the cytoplasm. The catalysed reaction is ATP + H2O + cellular proteinSide 1 = ADP + phosphate + cellular proteinSide 2.. Its function is as follows. Part of the Sec protein translocase complex. Interacts with the SecYEG preprotein conducting channel. Has a central role in coupling the hydrolysis of ATP to the transfer of proteins into and across the cell membrane, serving both as a receptor for the preprotein-SecB complex and as an ATP-driven molecular motor driving the stepwise translocation of polypeptide chains across the membrane. The chain is Protein translocase subunit SecA from Sinorhizobium medicae (strain WSM419) (Ensifer medicae).